A 505-amino-acid chain; its full sequence is Peroxisome proliferator-activated receptor gamma (505 aa).

Residue Thr-84 is glycosylated (O-linked (GlcNAc) threonine). Ser-112 carries the post-translational modification Phosphoserine; by MAPK. Positions 136 to 210 (AIECRVCGDK…VGMSHNAIRF (75 aa)) form a DNA-binding region, nuclear receptor. NR C4-type zinc fingers lie at residues 139 to 159 (CRVC…CEGC) and 176 to 198 (CDLN…FQKC). The segment at 205 to 280 (HNAIRFGRMP…DKSPFVIYDM (76 aa)) is interaction with FAM120B. Residues 238–503 (DLRALAKHLY…HPLLQEIYKD (266 aa)) enclose the NR LBD domain. Lys-252 is covalently cross-linked (Glycyl lysine isopeptide (Lys-Gly) (interchain with G-Cter in ubiquitin)). The short motif at 495-503 (PLLQEIYKD) is the 9aaTAD element.

It belongs to the nuclear hormone receptor family. NR1 subfamily. Interacts with FOXO1 (acetylated form). Heterodimer with other nuclear receptors, such as RXRA. The heterodimer with the retinoic acid receptor RXRA is called adipocyte-specific transcription factor ARF6. Interacts with NCOA6 coactivator, leading to a strong increase in transcription of target genes. Interacts with coactivator PPARBP, leading to a mild increase in transcription of target genes. Interacts with NOCA7 in a ligand-inducible manner. Interacts with NCOA1 and NCOA2 LXXLL motifs. Interacts with ASXL1, ASXL2, DNTTIP2, FAM120B, MAP2K1/MEK1, NR0B2, PDPK1, PRDM16, PRMT2 and TGFB1I1. Interacts (when activated by agonist) with PPP5C. Interacts with HELZ2 and THRAP3; the interaction stimulates the transcriptional activity of PPARG. Interacts with PER2, the interaction is ligand dependent and blocks PPARG recruitment to target promoters. Interacts with NOCT. Interacts with ACTN4. Interacts (when in the liganded conformation) with GPS2. Interacts with CRY1 and CRY2 in a ligand-dependent manner. In the absence of hormonal ligand, interacts with TACC1. In macrophages, interacts with PAQR3 and STUB1; the interactions promote PPARG poylubiquitination and STUB1-mediated degradation. Post-translationally, phosphorylated by MAPK. The phosphorylation inhibits PPAR gamma activity. In terms of processing, O-GlcNAcylation at Thr-84 reduces transcriptional activity in adipocytes. Phosphorylated at basal conditions and dephosphorylated when treated with the ligand. May be dephosphorylated by PPP5C. The phosphorylated form may be inactive and dephosphorylation at induces adipogenic activity. Post-translationally, ubiquitinated by E3 ubiquitin-protein ligase complex containing FBXO9; leading to proteasomal degradation. Ubiquitinated at Lys-252 by TRIM55 leading to proteasomal degradation. Ubiquitinated by E3 ubiquitin-protein ligase STUB1/CHIP; leading to proteasomal degradation. In terms of tissue distribution, highest expression in adipose tissue.

The protein resides in the nucleus. Its subcellular location is the cytoplasm. With respect to regulation, PDPK1 activates its transcriptional activity independently of its kinase activity. In terms of biological role, nuclear receptor that binds peroxisome proliferators such as hypolipidemic drugs and fatty acids. Once activated by a ligand, the nuclear receptor binds to DNA specific PPAR response elements (PPRE) and modulates the transcription of its target genes, such as acyl-CoA oxidase. It therefore controls the peroxisomal beta-oxidation pathway of fatty acids. Key regulator of adipocyte differentiation and glucose homeostasis. ARF6 acts as a key regulator of the tissue-specific adipocyte P2 (aP2) enhancer. Acts as a critical regulator of gut homeostasis by suppressing NF-kappa-B-mediated pro-inflammatory responses. Plays a role in the regulation of cardiovascular circadian rhythms by regulating the transcription of BMAL1 in the blood vessels. This chain is Peroxisome proliferator-activated receptor gamma (Pparg), found in Rattus norvegicus (Rat).